A 152-amino-acid chain; its full sequence is Small ribosomal subunit protein uS13 (152 aa).

At serine 2 the chain carries N-acetylserine. Residue lysine 91 forms a Glycyl lysine isopeptide (Lys-Gly) (interchain with G-Cter in SUMO2) linkage. N6-acetyllysine; alternate is present on residues lysine 94 and lysine 106. Glycyl lysine isopeptide (Lys-Gly) (interchain with G-Cter in SUMO2); alternate cross-links involve residues lysine 94 and lysine 106.

This sequence belongs to the universal ribosomal protein uS13 family. As to quaternary structure, component of the small ribosomal subunit.

The protein resides in the cytoplasm. Its function is as follows. Component of the small ribosomal subunit. The ribosome is a large ribonucleoprotein complex responsible for the synthesis of proteins in the cell. This Homo sapiens (Human) protein is Small ribosomal subunit protein uS13 (RPS18).